A 208-amino-acid polypeptide reads, in one-letter code: 3-demethoxyubiquinol 3-hydroxylase (208 aa).

Fe cation contacts are provided by Glu57, Glu87, His90, Glu139, Glu171, and His174.

This sequence belongs to the COQ7 family. Requires Fe cation as cofactor.

The protein localises to the cell membrane. The catalysed reaction is a 5-methoxy-2-methyl-3-(all-trans-polyprenyl)benzene-1,4-diol + AH2 + O2 = a 3-demethylubiquinol + A + H2O. Its pathway is cofactor biosynthesis; ubiquinone biosynthesis. Its function is as follows. Catalyzes the hydroxylation of 2-nonaprenyl-3-methyl-6-methoxy-1,4-benzoquinol during ubiquinone biosynthesis. The protein is 3-demethoxyubiquinol 3-hydroxylase of Verminephrobacter eiseniae (strain EF01-2).